The chain runs to 122 residues: Probable transcription factor PqrA (122 aa).

The 101-residue stretch at 7–107 folds into the HTH araC/xylS-type domain; that stretch reads NDILKWLETQ…NTTPAKFREN (101 aa). DNA-binding regions (H-T-H motif) lie at residues 26 to 47 and 74 to 97; these read DTIANKSGYSKWHLQRIFKDFK and ILDIALMYGFSSQATFTRIFKKHF.

Upon expression in E.coli strain KY2563 confers resistance to antibiotics ofloxacin, ciprofloxacin, tetracycline, chloramphenicol, and ceftazidime (increases minimal inhibitory concentration by 8-32 times); also decreases expression of OmpF. The sequence is that of Probable transcription factor PqrA from Proteus vulgaris.